The sequence spans 610 residues: Diol dehydratase-reactivating factor large subunit (610 aa).

Residue Asn-11–Ser-13 coordinates ATP. Residues Thr-105, Asp-166, and Asp-183 each contribute to the Mg(2+) site. ATP contacts are provided by residues Glu-459–Lys-462, Gly-557–Ser-558, and Arg-591.

It belongs to the DdrA/PduG family. Component of the DDR complex, a heterotetramer of DdrA(2)/DdrB(2). The DDR complex interacts with the diol dehydratase complex in the presence of ADP but not ATP. The cofactor is Mg(2+).

The catalysed reaction is ATP + H2O = ADP + phosphate + H(+). In terms of biological role, large subunit of the diol dehydratase-reactivating factor (DDR), which reactivates suicidally inhibited adenosylcobalamin-dependent diol dehydratase (DD, pddA, pddB, pddC). DDR acts as a chaperone, reactivating inactivated DD holoenzyme in the presence of ATP, Mg(2+) and free adenosylcobalamin (AdoCbl), by mediating the exchange of the tightly bound damaged cofactor AdoCbl for a free intact one. Reactivation takes place in two steps: ADP-dependent cobalamin release, then ATP-dependent dissociation of the DD apoenzyme-DDR complex. DDR has weak ATPase activity which is required for DD reactivation. This subunit contains the adenosine nucleotide binding site. Activates glycerol-inactivated, O2-inactivated holoenzyme and inactivated enzyme-cyanocobalamin complex. Also reactivates glycerol-inactivated hologlycerol dehydratase, a DD isozyme. This is Diol dehydratase-reactivating factor large subunit from Klebsiella michiganensis (strain ATCC 8724 / DSM 4798 / JCM 20051 / NBRC 3318 / NRRL B-199 / KCTC 1686 / BUCSAV 143 / CCM 1901).